The chain runs to 188 residues: Putative protein SSX6 (188 aa).

Disordered regions lie at residues 1-22 (MNGD…EKRS) and 74-188 (KRAT…EDDK). Residues 20–83 (KRSKAFDDIA…KRATDSQRND (64 aa)) form the KRAB-related domain. Basic and acidic residues-rich tracts occupy residues 75–96 (RATD…EVER) and 112–122 (MPEKPAEEGSD). S123 carries the phosphoserine modification. Over residues 147–156 (SSEKIHERSG) the composition is skewed to basic and acidic residues. A compositionally biased stretch (basic residues) spans 157-170 (PKRGKHAWTHRLRE). Positions 179–188 (EISDPEEDDK) are enriched in acidic residues.

The protein belongs to the SSX family. As to expression, not detected in any normal tissues. Expressed in a melanoma cell line.

Its function is as follows. Could act as a modulator of transcription. The polypeptide is Putative protein SSX6 (Homo sapiens (Human)).